A 111-amino-acid chain; its full sequence is Nucleoid-associated protein Cag_1190 (111 aa).

This sequence belongs to the YbaB/EbfC family. In terms of assembly, homodimer.

Its subcellular location is the cytoplasm. It is found in the nucleoid. Binds to DNA and alters its conformation. May be involved in regulation of gene expression, nucleoid organization and DNA protection. The polypeptide is Nucleoid-associated protein Cag_1190 (Chlorobium chlorochromatii (strain CaD3)).